The sequence spans 289 residues: Thymidylate synthase (289 aa).

Residues Arg26 and 151–152 each bind dUMP; that span reads RR. The active-site Nucleophile is the Cys171. DUMP is bound by residues 191–194, Asn202, and 232–234; these read RSGD and HVY. Position 194 (Asp194) interacts with (6R)-5,10-methylene-5,6,7,8-tetrahydrofolate. Ala288 serves as a coordination point for (6R)-5,10-methylene-5,6,7,8-tetrahydrofolate.

This sequence belongs to the thymidylate synthase family. Homodimer.

It carries out the reaction dUMP + (6R)-5,10-methylene-5,6,7,8-tetrahydrofolate = 7,8-dihydrofolate + dTMP. It functions in the pathway pyrimidine metabolism; dTTP biosynthesis. In Equus caballus (Horse), this protein is Thymidylate synthase.